A 177-amino-acid chain; its full sequence is Protein BROTHER of FT and TFL 1 (177 aa).

The protein belongs to the phosphatidylethanolamine-binding protein family.

The protein resides in the cytoplasm. Its function is as follows. May form complexes with phosphorylated ligands by interfering with kinases and their effectors. The polypeptide is Protein BROTHER of FT and TFL 1 (BFT) (Arabidopsis thaliana (Mouse-ear cress)).